Reading from the N-terminus, the 924-residue chain is MVRLRTLVRAIAAASVLTSGMAHGLGLGEITLKSALNQPLDAEIELLEVRDLGSGEVIPSLASPEEFSKAGVDRLYYLTDLKFTPVVKPNGKSVIRVTSSKPVQEPYLNFLVQVLWPNGRLLREYTVLLDPPLYSPQAAASAPQAPVSAPRATGAPRTPQAPAPVRTTAPAGSDTYRTVSNDTLWEIAQRNRTDRVSVPQAMLAFQELNPGAFVDGNINRLKSGQVLRIPTEQQMLERSPREALSQVQAQNQSWRGSRNPAAGTAGARQLDATQRNAAGSAPSKVDATDNLRLVSGEGKASKGADKGGKGDSKAIADTLAVTKESLDSTRRENEELQSRMQDLQSQLDKLQKLIQLKDAQLAKLQGQLGAEGQGAAQPNAALPDASQPNAAAQAPAQPGTPAAAAPTPAPAGEAPAAPAQPPVAPPPAPVAEKPPAPAVPAPAPVQAAEQPAPSFLDELLANPLWLAVIGGSALLALLVLLMILSRRNAQKEKEEAQAFAADAGEEQEDALDLGKDGFDDLTLDEPEPQVAAAAPQVEKTTAQTSDALGEADIYIAYGRFNQAAELLQNAIYDEPQRTDLRLKLMEVYAEMGDREGFARQENELREIGGAQPQVEQLKSRYPAMVAVAAVAGLAGAKLAQDELDSFSLDDLSLDDSGHAAKPDAAGQDLDDAFDLSLDDLGGGDLGSDDVQADLKSDSGALDDLTLDSDLDLAASTAADKPVDDLDFGLDFAELAETPSQPKHDDLGDFSLDLDAPEDKLSDDDFLLSLNDEVPAAAPANNEFTLDTEAAEEPALSLPDDFDLSLADEPTEPAAPEKGEDSFAAQLDEVSAQLDELASNLDEPKSAAPSFSAEDAAVASALDGDADDDFDFLSGADEAATKLDLARAYIDMGDSEGARDILDEVLAEGNDSQQAEARELLERLA.

A signal peptide spans 1–24; that stretch reads MVRLRTLVRAIAAASVLTSGMAHG. Residues 140–150 show a composition bias toward low complexity; that stretch reads ASAPQAPVSAP. Disordered stretches follow at residues 140–176, 237–312, and 372–445; these read ASAP…SDTY, ERSP…KGDS, and GQGA…PAPV. Residues 174–229 enclose the LysM domain; sequence DTYRTVSNDTLWEIAQRNRTDRVSVPQAMLAFQELNPGAFVDGNINRLKSGQVLRI. Residues 245 to 256 show a composition bias toward polar residues; the sequence is SQVQAQNQSWRG. Residues 299–312 show a composition bias toward basic and acidic residues; sequence KASKGADKGGKGDS. A compositionally biased stretch (low complexity) spans 390 to 417; sequence AAAQAPAQPGTPAAAAPTPAPAGEAPAA. Over residues 418–443 the composition is skewed to pro residues; it reads PAQPPVAPPPAPVAEKPPAPAVPAPA. Residues 464 to 484 form a helical membrane-spanning segment; the sequence is LWLAVIGGSALLALLVLLMIL. The disordered stretch occupies residues 799–858; sequence DDFDLSLADEPTEPAAPEKGEDSFAAQLDEVSAQLDELASNLDEPKSAAPSFSAEDAAVA.

Interacts with FimL. Interacts with DgcP.

The protein localises to the cell inner membrane. Inner membrane hub protein that plays both cAMP-dependent and cAMP-independent roles in twitching motility. Regulates intracellular cyclic AMP (cAMP) levels through the activation of adenylate cyclase CyaB. Plays an essential role in a number of virulence mechanisms including type IV pilus (T4P)-mediated assembly and twitching motility as well as cAMP-dependent virulence gene expression. Also mediates type II secretion (T2S) of lipases and proteases. In addition, mediates the cAMP-independent localization of multiple T4P structural and regulatory components to the cell poles. This role in directing proteins to the cell pole is not restricted to type IV component and involves other proteins such as the diguanylate cyclase DgcP. The protein is Motility hub protein FimV (fimV) of Pseudomonas aeruginosa (strain UCBPP-PA14).